A 140-amino-acid polypeptide reads, in one-letter code: Profilin-2 (140 aa).

Position 2 is an N-acetylalanine (Ala2).

The protein belongs to the profilin family. Occurs in many kinds of cells as a complex with monomeric actin in a 1:1 ratio. Interacts with PFN2. Interacts with ACTMAP (via N-terminus); the interaction may facilitate efficient cleavage of the acetylated N-terminus of immature actin by ACTMAP.

It localises to the cytoplasm. The protein localises to the cytoskeleton. Functionally, binds to actin and affects the structure of the cytoskeleton. At high concentrations, profilin prevents the polymerization of actin, whereas it enhances it at low concentrations. By binding to PIP2, it inhibits the formation of IP3 and DG. This Rattus norvegicus (Rat) protein is Profilin-2 (Pfn2).